A 60-amino-acid chain; its full sequence is uncharacterized protein (60 aa).

The signal sequence occupies residues 1-21; it reads MNKLLKLFFITIIIYNNIAFA.

This is an uncharacterized protein from Rickettsia prowazekii (strain Madrid E).